The following is a 759-amino-acid chain: Nucleolar RNA helicase 2-A (759 aa).

The disordered stretch occupies residues 1–154 (MPVKVYAEEM…KKRKTDTTEI (154 aa)). Residues 77 to 86 (ETAEECDGEQ) show a composition bias toward acidic residues. A Q motif motif is present at residues 179 to 207 (GDFSKFPLSKETIKNLQAKGVSYLFPIQS). Positions 210–389 (FHTAYSGKDV…KKYMRKQFEK (180 aa)) constitute a Helicase ATP-binding domain. 223–230 (ARTGTGKT) provides a ligand contact to ATP. The DEAD box motif lies at 332-335 (DEVD). The Helicase C-terminal domain maps to 422–566 (DLVQVYSGSH…VGVPSLLNVA (145 aa)). The segment at 709 to 759 (QESERNFDGPRNRGFGGRGRRPFDRRNNSRNSNRGGGGRGRNRNGGFRRGR) is disordered. Basic and acidic residues predominate over residues 710–719 (ESERNFDGPR). A compositionally biased stretch (basic residues) spans 748 to 759 (GRNRNGGFRRGR).

It belongs to the DEAD box helicase family. DDX21/DDX50 subfamily. In terms of tissue distribution, widely expressed. Expressed at higher level in stomach. Expressed at higher level compared to ddx21-b.

The protein localises to the nucleus. Its subcellular location is the nucleolus. It is found in the nucleoplasm. The protein resides in the cytoplasm. It localises to the cytosol. The protein localises to the mitochondrion. The catalysed reaction is ATP + H2O = ADP + phosphate + H(+). RNA helicase that acts as a sensor of the transcriptional status of both RNA polymerase (Pol) I and II: promotes ribosomal RNA (rRNA) processing and transcription from polymerase II (Pol II). Binds various RNAs, such as rRNAs, snoRNAs, 7SK and, at lower extent, mRNAs. In the nucleolus, localizes to rDNA locus, where it directly binds rRNAs and snoRNAs, and promotes rRNA transcription, processing and modification. Required for rRNA 2'-O-methylation, possibly by promoting the recruitment of late-acting snoRNAs SNORD56 and SNORD58 with pre-ribosomal complexes. In the nucleoplasm, binds 7SK RNA and is recruited to the promoters of Pol II-transcribed genes: acts by facilitating the release of P-TEFb from inhibitory 7SK snRNP in a manner that is dependent on its helicase activity, thereby promoting transcription of its target genes. Required to prevent R-loop-associated DNA damage and transcription-associated genomic instability. In Xenopus laevis (African clawed frog), this protein is Nucleolar RNA helicase 2-A (ddx21-a).